We begin with the raw amino-acid sequence, 135 residues long: Membrane-anchored ubiquitin-fold protein 4 (135 aa).

The segment at 1–20 (MAEKEEGKVAAEGGAEAEAD) is disordered. A Ubiquitin-like domain is found at 23-92 (VEVKFRLFDG…NDKNIAQCRA (70 aa)). Cys-132 is modified (cysteine methyl ester). A lipid anchor (S-geranylgeranyl cysteine) is attached at Cys-132. The propeptide at 133–135 (TIL) is removed in mature form.

It is found in the cell membrane. May serve as docking site to facilitate the association of other proteins to the plasma membrane. The chain is Membrane-anchored ubiquitin-fold protein 4 (MUB4) from Oryza sativa subsp. japonica (Rice).